We begin with the raw amino-acid sequence, 351 residues long: C(7)-cyclitol 7-kinase (351 aa).

This sequence belongs to the ROK (NagC/XylR) family.

It carries out the reaction valienone + ATP = valienone 7-phosphate + ADP + H(+). It catalyses the reaction validone + ATP = validone 7-phosphate + ADP + H(+). Involved in the biosynthesis of the antifungal agent validamycin A. Catalyzes the phosphorylation of valienone and validone to their 7-phosphate derivatives. This Streptomyces hygroscopicus subsp. limoneus protein is C(7)-cyclitol 7-kinase.